Here is a 579-residue protein sequence, read N- to C-terminus: Zinc finger protein 248 (579 aa).

The KRAB domain maps to Val8 to Pro79. A C2H2-type 1; degenerate zinc finger spans residues Thr240–His264. Lys341 is covalently cross-linked (Glycyl lysine isopeptide (Lys-Gly) (interchain with G-Cter in SUMO2)). 7 consecutive C2H2-type zinc fingers follow at residues Phe380 to His402, Tyr408 to His430, Tyr436 to His458, Tyr464 to His486, Phe492 to His514, Tyr520 to Thr543, and Tyr548 to His570.

It belongs to the krueppel C2H2-type zinc-finger protein family.

Its subcellular location is the nucleus. In terms of biological role, may be involved in transcriptional regulation. The sequence is that of Zinc finger protein 248 (ZNF248) from Homo sapiens (Human).